We begin with the raw amino-acid sequence, 327 residues long: Ubiquinone biosynthesis protein COQ4, mitochondrial (327 aa).

Zn(2+) contacts are provided by H208, D209, H212, and E224.

This sequence belongs to the COQ4 family. Component of a multi-subunit COQ enzyme complex, composed of at least COQ3, COQ4, COQ5, COQ6, COQ7 and COQ9. Zn(2+) is required as a cofactor.

It localises to the mitochondrion inner membrane. The catalysed reaction is a 4-hydroxy-3-methoxy-5-(all-trans-polyprenyl)benzoate + H(+) = a 2-methoxy-6-(all-trans-polyprenyl)phenol + CO2. It functions in the pathway cofactor biosynthesis; ubiquinone biosynthesis. In terms of biological role, lyase that catalyzes the C1-decarboxylation of 4-hydroxy-3-methoxy-5-(all-trans-polyprenyl)benzoic acid into 2-methoxy-6-(all-trans-polyprenyl)phenol during ubiquinone biosynthesis. This chain is Ubiquinone biosynthesis protein COQ4, mitochondrial, found in Lachancea thermotolerans (strain ATCC 56472 / CBS 6340 / NRRL Y-8284) (Yeast).